The following is a 25-amino-acid chain: Caerin-1.7 (25 aa).

The residue at position 25 (L25) is a Leucine amide.

Belongs to the frog skin active peptide (FSAP) family. Caerin subfamily. Caerin-1.7.1 does not have any antibacterial activity. As to expression, expressed by the skin dorsal glands.

It localises to the secreted. In terms of biological role, antibacterial peptide, that adopts an alpha helical conformation which can disrupt bacterial membranes. Each caerin displays a different antimicrobial specificity. This Ranoidea xanthomera (Northern orange-eyed tree frog) protein is Caerin-1.7.